A 135-amino-acid chain; its full sequence is Large ribosomal subunit protein mL41 (135 aa).

Residues 1 to 13 (MGVLSALARGFVR) constitute a mitochondrion transit peptide.

This sequence belongs to the mitochondrion-specific ribosomal protein mL41 family. In terms of assembly, component of the mitochondrial ribosome large subunit (39S) which comprises a 16S rRNA and about 50 distinct proteins.

It is found in the mitochondrion. In terms of biological role, component of the mitochondrial ribosome large subunit. Also involved in apoptosis and cell cycle. The polypeptide is Large ribosomal subunit protein mL41 (mrpl41) (Danio rerio (Zebrafish)).